A 202-amino-acid polypeptide reads, in one-letter code: Putative 3-methyladenine DNA glycosylase (202 aa).

Belongs to the DNA glycosylase MPG family.

In Rhodopseudomonas palustris (strain BisB5), this protein is Putative 3-methyladenine DNA glycosylase.